A 417-amino-acid chain; its full sequence is UDP-N-acetylglucosamine 1-carboxyvinyltransferase (417 aa).

22–23 (KN) is a phosphoenolpyruvate binding site. R92 lines the UDP-N-acetyl-alpha-D-glucosamine pocket. The active-site Proton donor is C116. Residue C116 is modified to 2-(S-cysteinyl)pyruvic acid O-phosphothioketal. UDP-N-acetyl-alpha-D-glucosamine contacts are provided by D304 and I326.

This sequence belongs to the EPSP synthase family. MurA subfamily.

The protein localises to the cytoplasm. The enzyme catalyses phosphoenolpyruvate + UDP-N-acetyl-alpha-D-glucosamine = UDP-N-acetyl-3-O-(1-carboxyvinyl)-alpha-D-glucosamine + phosphate. It functions in the pathway cell wall biogenesis; peptidoglycan biosynthesis. In terms of biological role, cell wall formation. Adds enolpyruvyl to UDP-N-acetylglucosamine. This Geotalea uraniireducens (strain Rf4) (Geobacter uraniireducens) protein is UDP-N-acetylglucosamine 1-carboxyvinyltransferase.